The following is an 809-amino-acid chain: MLSQEEINKKLEEWPKHYNPKEIELKWQQIWLSKEYWEKVFRFKDEDEKSPVFVIDTPPPFTSGELHMGHAYWVTIADTIGRFKRLQGYNVLLPQGWDTQGLPTELKVQYRLKIPKENRELFLKKCVEWTEDMIKKMKEAMIRLGYRPEWERYEYRTYENSYRKIIQKSLLEMYKLGLIEIREGPVYWCPKCETALAQSEVGYLEKDGILAYIRFPLKDGGEIIIATTRPELLAATQAVAVHPEDERYKGLIGKIAIIPLFNKEVKIIGDDAVEKEFGTGAVMISTYGDPQDIKWQLKYNLPTTELIDEKGRIKNTNGLLDGLKIEEARKKIIELLKEKGYLVKIENFKHNVLSHTERSDCLSPIEFLVKKQIFIKTLQFKDKLLEEYKKMKFIPSRMAYYLEDWIKSLEWDWNISRQRVYGTPLPFWYCDNNHLIPAREEDLPLDPTKTKPPYEKCPQCGLPLKPVTDVADVWIDSSVTVIYLTGFYTDKRKFEKTFPASVRLQGTDIIRTWLFYTFFRTLVLTGNIPFKEVLINGQVLGPDGTRMSKSKGNVVNPLDKVDEFGADSIRLTLLDARIGDDFPFKWETVRGKKLLLQKLWNAGRLSYPFIGKKKFDRPSNLHPIDRWILQEHKRFVKKSIEAYNNYDFYQVVESLYSYFWETIADEYLELIKHRLFAEDLSALYTLSRVFKDLLIILHPIAPHITEEMYNRLYGDKISIILEGLPNVDDIEEDPNIDTLGKYIKTTTSTIRTLKIQNRIPIPVSINVKLVGPKEYIETIKRVEDDIIKTLKIEKIVYEEGEEIKAELLS.

Residues 60-70 carry the 'HIGH' region motif; the sequence is PFTSGELHMGH. The short motif at 546–550 is the 'KMSKS' region element; it reads RMSKS. Position 549 (K549) interacts with ATP.

This sequence belongs to the class-I aminoacyl-tRNA synthetase family. ValS type 2 subfamily.

It is found in the cytoplasm. The enzyme catalyses tRNA(Val) + L-valine + ATP = L-valyl-tRNA(Val) + AMP + diphosphate. In terms of biological role, catalyzes the attachment of valine to tRNA(Val). As ValRS can inadvertently accommodate and process structurally similar amino acids such as threonine, to avoid such errors, it has a 'posttransfer' editing activity that hydrolyzes mischarged Thr-tRNA(Val) in a tRNA-dependent manner. The polypeptide is Valine--tRNA ligase (Sulfurisphaera tokodaii (strain DSM 16993 / JCM 10545 / NBRC 100140 / 7) (Sulfolobus tokodaii)).